Reading from the N-terminus, the 101-residue chain is MSQQPPAVGVPPSHAYPAEGPPKDAYPPPGQPYPQQGYPPPQGYPQQGYPPQGYPPQGYPEQGYPQQGYPPQQQQQQKHSPGMLEGCIAALCCYCVLDACF.

A disordered region spans residues 1-80; the sequence is MSQQPPAVGV…PQQQQQQKHS (80 aa). Residues 24 to 43 show a composition bias toward pro residues; it reads DAYPPPGQPYPQQGYPPPQG. A compositionally biased stretch (low complexity) spans 59–77; sequence YPEQGYPQQGYPPQQQQQQ. A helical transmembrane segment spans residues 78 to 95; that stretch reads KHSPGMLEGCIAALCCYC.

It belongs to the CYSTM1 family.

The protein localises to the membrane. This chain is Cysteine-rich and transmembrane domain-containing protein B, found in Arabidopsis thaliana (Mouse-ear cress).